A 211-amino-acid polypeptide reads, in one-letter code: Arginine exporter protein ArgO (211 aa).

Transmembrane regions (helical) follow at residues 1–21 (MISY…PLGP), 37–57 (LMIA…GIFG), 68–88 (LLAL…FGAL), 111–131 (IIAT…DTFV), 147–167 (WFAL…ALLA), and 179–199 (AQRI…FQLA).

The protein belongs to the LysE/ArgO transporter (TC 2.A.75) family.

The protein localises to the cell inner membrane. It carries out the reaction L-arginine(in) = L-arginine(out). Its function is as follows. Involved in the export of arginine. Important to control the intracellular level of arginine and the correct balance between arginine and lysine. This chain is Arginine exporter protein ArgO, found in Salmonella paratyphi A (strain ATCC 9150 / SARB42).